Here is a 291-residue protein sequence, read N- to C-terminus: Acetyl-coenzyme A carboxylase carboxyl transferase subunit beta (291 aa).

Positions 34 to 291 (MWTKCSNCNS…LILHGVNKYE (258 aa)) constitute a CoA carboxyltransferase N-terminal domain. The Zn(2+) site is built by Cys38, Cys41, Cys57, and Cys60. The segment at 38–60 (CSNCNSMIYYEDLENNKYVCTKC) adopts a C4-type zinc-finger fold.

It belongs to the AccD/PCCB family. In terms of assembly, acetyl-CoA carboxylase is a heterohexamer composed of biotin carboxyl carrier protein (AccB), biotin carboxylase (AccC) and two subunits each of ACCase subunit alpha (AccA) and ACCase subunit beta (AccD). Zn(2+) serves as cofactor.

The protein localises to the cytoplasm. The enzyme catalyses N(6)-carboxybiotinyl-L-lysyl-[protein] + acetyl-CoA = N(6)-biotinyl-L-lysyl-[protein] + malonyl-CoA. Its pathway is lipid metabolism; malonyl-CoA biosynthesis; malonyl-CoA from acetyl-CoA: step 1/1. Its function is as follows. Component of the acetyl coenzyme A carboxylase (ACC) complex. Biotin carboxylase (BC) catalyzes the carboxylation of biotin on its carrier protein (BCCP) and then the CO(2) group is transferred by the transcarboxylase to acetyl-CoA to form malonyl-CoA. This Clostridium botulinum (strain Alaska E43 / Type E3) protein is Acetyl-coenzyme A carboxylase carboxyl transferase subunit beta.